The primary structure comprises 327 residues: Phenylalanine--tRNA ligase alpha subunit (327 aa).

Glu252 contributes to the Mg(2+) binding site.

It belongs to the class-II aminoacyl-tRNA synthetase family. Phe-tRNA synthetase alpha subunit type 1 subfamily. Tetramer of two alpha and two beta subunits. Requires Mg(2+) as cofactor.

Its subcellular location is the cytoplasm. It catalyses the reaction tRNA(Phe) + L-phenylalanine + ATP = L-phenylalanyl-tRNA(Phe) + AMP + diphosphate + H(+). This is Phenylalanine--tRNA ligase alpha subunit from Edwardsiella ictaluri (strain 93-146).